A 376-amino-acid polypeptide reads, in one-letter code: MAKLHLQWLLLLPTLCSLGAATESASSPDCAQGPKFWCQSLEQAIQCRALGHCLQEVWGHAGANDLCQECEDIVHLLTKMTKEDAFQDTIRKFLEQECDILPLKLLVPRCRQVLDVYLPLVIDYFQGQIKPKAICSHVGLCPLGQTKPEQKPEMLDAIPNPLLNKLVLPALPGAFLARPGPHTQDLSEQQLPIPLPFCWLCRTLIKRVQAVIPKGVLAVAVSQVCHVVPLVVGGICQCLAERYTVLLLDALLGRVVPQLVCGLVLRCSTADAIGPALPALEPLIEKWPLQDTECHFCKSVINQAWNTSEQAMPQAMHQACLRFWLDRQKCEQFVEQHMPQLLALVPRSQDAHTSCQALGVCEAPASPLQCFQTPHL.

Positions 1–24 (MAKLHLQWLLLLPTLCSLGAATES) are cleaved as a signal peptide. The Saposin A-type domain occupies 25 to 63 (ASSPDCAQGPKFWCQSLEQAIQCRALGHCLQEVWGHAGA). Positions 25 to 190 (ASSPDCAQGP…PHTQDLSEQQ (166 aa)) are excised as a propeptide. Saposin B-type domains follow at residues 63 to 145 (ANDL…PLGQ), 194 to 271 (PLPF…STAD), and 290 to 365 (QDTE…EAPA). 9 disulfides stabilise this stretch: Cys-67/Cys-141, Cys-70/Cys-135, Cys-98/Cys-110, Cys-198/Cys-267, Cys-201/Cys-261, Cys-225/Cys-236, Cys-294/Cys-361, Cys-297/Cys-355, and Cys-320/Cys-330. Positions 270–376 (ADAIGPALPA…PLQCFQTPHL (107 aa)) are excised as a propeptide. Asn-306 carries N-linked (GlcNAc...) asparagine glycosylation.

As to quaternary structure, homodimer; disulfide-linked.

The protein localises to the secreted. It is found in the extracellular space. It localises to the surface film. Functionally, pulmonary surfactant-associated proteins promote alveolar stability by lowering the surface tension at the air-liquid interface in the peripheral air spaces. SP-B increases the collapse pressure of palmitic acid to nearly 70 millinewtons per meter. This is Pulmonary surfactant-associated protein B (Sftpb) from Rattus norvegicus (Rat).